Consider the following 962-residue polypeptide: Glycine dehydrogenase (decarboxylating) (962 aa).

Position 709 is an N6-(pyridoxal phosphate)lysine (K709).

This sequence belongs to the GcvP family. The glycine cleavage system is composed of four proteins: P, T, L and H. Pyridoxal 5'-phosphate serves as cofactor.

It carries out the reaction N(6)-[(R)-lipoyl]-L-lysyl-[glycine-cleavage complex H protein] + glycine + H(+) = N(6)-[(R)-S(8)-aminomethyldihydrolipoyl]-L-lysyl-[glycine-cleavage complex H protein] + CO2. In terms of biological role, the glycine cleavage system catalyzes the degradation of glycine. The P protein binds the alpha-amino group of glycine through its pyridoxal phosphate cofactor; CO(2) is released and the remaining methylamine moiety is then transferred to the lipoamide cofactor of the H protein. The protein is Glycine dehydrogenase (decarboxylating) of Shewanella amazonensis (strain ATCC BAA-1098 / SB2B).